Here is a 248-residue protein sequence, read N- to C-terminus: Kallikrein-12 (248 aa).

Positions 1–17 (MGLSIFLLLCVLGLSQA) are cleaved as a signal peptide. In terms of domain architecture, Peptidase S1 spans 22–246 (IFNGTECGRN…YVDWIRMIMR (225 aa)). The N-linked (GlcNAc...) asparagine glycan is linked to Asn-24. Cystine bridges form between Cys-28-Cys-161, Cys-47-Cys-63, Cys-133-Cys-235, Cys-140-Cys-206, Cys-172-Cys-186, and Cys-196-Cys-222. Catalysis depends on charge relay system residues His-62 and Asp-108. An N-linked (GlcNAc...) asparagine glycan is attached at Asn-163. Catalysis depends on Ser-200, which acts as the Charge relay system.

This sequence belongs to the peptidase S1 family. Kallikrein subfamily.

It is found in the secreted. The polypeptide is Kallikrein-12 (KLK12) (Homo sapiens (Human)).